We begin with the raw amino-acid sequence, 453 residues long: Armadillo repeat-containing X-linked protein 1 (453 aa).

The Mitochondrial intermembrane segment spans residues 1 to 6; it reads MGRTRE. Mitochondrion outer membrane (MOM)-targeting sequence regions lie at residues 1 to 6 and 26 to 36; these read MGRTRE and RLAWGRDENEK. Residues 7–29 form a helical; Signal-anchor membrane-spanning segment; the sequence is AGCVAAGVVIGAGACYCVYRLAW. Topologically, residues 30 to 453 are cytoplasmic; it reads GRDENEKIWD…VKVLKVLTKL (424 aa). Disordered stretches follow at residues 58–77 and 132–182; these read AKTN…SEVK and ISGN…RAPA. The span at 167-177 shows a compositional bias: basic residues; the sequence is GKSKGKARSKS. ARM repeat units follow at residues 195 to 235, 237 to 276, 358 to 398, and 415 to 453; these read PYKI…NNAA, SFNQ…NLSV, PAMT…NIND, and SSLF…LTKL.

Belongs to the eutherian X-chromosome-specific Armcx family. In terms of assembly, interacts with MIRO1. In terms of tissue distribution, expressed at high levels ovary, heart, testis, prostate, brain, spleen and colon. Expressed at very low levels in liver and thymus. Not expressed in peripheral blood leukocytes. Not or reduced expressed in lung, prostate, colon, pancreas and ovarian carcinomas.

Its subcellular location is the mitochondrion. It localises to the mitochondrion outer membrane. In terms of biological role, regulates mitochondrial transport during axon regeneration. Increases the proportion of motile mitochondria by recruiting stationary mitochondria into the motile pool. Enhances mitochondria movement and neurite growth in both adult axons and embryonic neurons. Promotes neuronal survival and axon regeneration after nerve injury. May link mitochondria to the Trak1-kinesin motor complex via its interaction with MIRO1. In Homo sapiens (Human), this protein is Armadillo repeat-containing X-linked protein 1 (ARMCX1).